The chain runs to 246 residues: MRGFIIALQFLTRLPMPAPLRTIVVDDAAFARSMRWFPAVGLVIGAAVAGAAWAGALVDHRLGALAALIVWVGVTGALHLDGLADLADASGAAHKDRERLLAVLADPHVGSFGVVAIVLQLLSKLVLLDMLVDARAFGALVLVPFAARIGPLVWTWWLMPLHQGLAARFRSAIGPIDLAGWAAALAAAAWFTPALLVTPLLVLWWGWHVRRALGGISGDGHGAGIELIETGLLLSVAITGLWIHTT.

6 consecutive transmembrane segments (helical) span residues 37–57, 64–84, 100–122, 139–159, 185–205, and 223–243; these read FPAV…AGAL, ALAA…DGLA, LLAV…LQLL, ALVL…WWLM, LAAA…VLWW, and AGIE…GLWI.

This sequence belongs to the CobS family. Requires Mg(2+) as cofactor.

It is found in the cell inner membrane. The catalysed reaction is alpha-ribazole + adenosylcob(III)inamide-GDP = adenosylcob(III)alamin + GMP + H(+). It carries out the reaction alpha-ribazole 5'-phosphate + adenosylcob(III)inamide-GDP = adenosylcob(III)alamin 5'-phosphate + GMP + H(+). Its pathway is cofactor biosynthesis; adenosylcobalamin biosynthesis; adenosylcobalamin from cob(II)yrinate a,c-diamide: step 7/7. Its function is as follows. Joins adenosylcobinamide-GDP and alpha-ribazole to generate adenosylcobalamin (Ado-cobalamin). Also synthesizes adenosylcobalamin 5'-phosphate from adenosylcobinamide-GDP and alpha-ribazole 5'-phosphate. The polypeptide is Adenosylcobinamide-GDP ribazoletransferase (Novosphingobium aromaticivorans (strain ATCC 700278 / DSM 12444 / CCUG 56034 / CIP 105152 / NBRC 16084 / F199)).